The sequence spans 1321 residues: Insulin receptor substrate 2 (1321 aa).

Pro residues predominate over residues 1–10; that stretch reads MASAPLPGPP. 2 disordered regions span residues 1-32 and 51-73; these read MASAPLPGPPASAGGDGPNLNNNNNNNNHSVR and RGPGTGGDEASAAGGSPPQPPRL. Residues 16 to 144 enclose the PH domain; that stretch reads DGPNLNNNNN…WYRALTDLVS (129 aa). The span at 18 to 28 shows a compositional bias: low complexity; that stretch reads PNLNNNNNNNN. Residues 191 to 295 form the IRS-type PTB domain; the sequence is YREVWQVNLK…EAMKALKELF (105 aa). Residues 299–536 are disordered; sequence PRSKSQSSGS…ARDGSGGELY (238 aa). Phosphoserine occurs at positions 303 and 343. A Phosphothreonine modification is found at T347. S362 bears the Phosphoserine mark. The span at 364-376 shows a compositional bias: gly residues; it reads GDGGAAGGAGTAG. Residues S381, S385, and S388 each carry the phosphoserine modification. R409 is subject to Omega-N-methylarginine. Low complexity-rich tracts occupy residues 435-456 and 478-490; these read SPPAATSPGSLSSSSGHGSGSY and PSSGSASASGSPS. Position 517 is a phosphothreonine (T517). S520 carries the phosphoserine modification. T524 is subject to Phosphothreonine. Y536 is modified (phosphotyrosine; by INSR). A YXXM motif 1 motif is present at residues 536–539; it reads YGYM. The residue at position 556 (S556) is a Phosphoserine; by PLK1. S573 carries the post-translational modification Phosphoserine. A phosphothreonine mark is found at T575 and T576. S590 carries the phosphoserine modification. The short motif at 594 to 597 is the YXXM motif 2 element; sequence YTLM. Phosphoserine is present on residues S604 and S616. Phosphotyrosine is present on Y649. 2 consecutive short sequence motifs (YXXM motif) follow at residues 649–652 and 671–674; these read YMPM. Y671 carries the post-translational modification Phosphotyrosine; by INSR. Phosphoserine is present on residues S675, S678, S727, and S728. The short motif at 734 to 737 is the YXXM motif 5 element; it reads YMRM. S762 carries the post-translational modification Phosphoserine. T771 is modified (phosphothreonine). The residue at position 796 (S796) is a Phosphoserine. The YXXM motif 6 motif lies at 814–817; sequence YVLM. Position 819 is a phosphoserine (S819). Disordered regions lie at residues 834 to 871 and 888 to 1091; these read ATPGAGTFGAAGGSHTQPHHSAVPSSMRPSAIGGRPEG and EGLQ…ASPT. S907 is modified (phosphoserine). Y911 carries the phosphotyrosine; by INSR modification. Residues 930–959 are compositionally biased toward low complexity; that stretch reads LLASAASSSSLLSASSPASSLGSGTPGTSS. Residue S965 is modified to Phosphoserine. Y970 is subject to Phosphotyrosine; by INSR. Residues 1005–1014 are compositionally biased toward pro residues; it reads PYPPLPPRPS. Positions 1039 to 1055 are enriched in polar residues; it reads AATSQGPTAGSSMSSEP. The YXXM motif 7 motif lies at 1061-1064; it reads YTEM. T1071 is subject to Phosphothreonine. Over residues 1072 to 1082 the composition is skewed to pro residues; the sequence is PPQPIVAPPKP. S1089 carries the post-translational modification Phosphoserine. S1098 bears the Phosphoserine; by PLK1 mark. Residues 1110 to 1198 form a disordered region; sequence LQVSQPPDPH…TSPGQAQPLV (89 aa). Residues 1139–1154 show a composition bias toward low complexity; the sequence is ETFSSTTTVTPVSPSF. T1148 carries the post-translational modification Phosphothreonine. 5 positions are modified to phosphoserine: S1151, S1163, S1165, S1175, and S1190. Residues 1163 to 1179 show a composition bias toward polar residues; that stretch reads SASVENVSLRKSSEGSS. Position 1242 is a phosphotyrosine; by INSR (Y1242). Positions 1251–1275 are disordered; it reads QGSLAQSQPQPGDKNSWSRTRSLGG. Over residues 1253–1271 the composition is skewed to polar residues; that stretch reads SLAQSQPQPGDKNSWSRTR. Y1303 is modified (phosphotyrosine; by INSR). Residue K1314 forms a Glycyl lysine isopeptide (Lys-Gly) (interchain with G-Cter in ubiquitin) linkage.

In terms of assembly, interacts with PHIP. Interacts with SH2B1; this interaction enhances leptin-induced activation of the PI3-kinase pathway. Interacts with GRB2. Interacts with PIK3R1. Interacts with DVL2; this interaction promotes the Wnt/beta-catenin signaling pathway. Post-translationally, phosphorylation fluctuates in a cell-cycle dependent manner with hyperphosphorylation during mitosis. Phosphorylated at Ser-556 and Ser-1098 by PLK1; these phosphorylations prevent the activation of the PI3K pathway upon growth factor stimulation by inhibiting the binding between IRS2 and the PI3K pathway components and increasing the level of IRS2 protein degradation. In addition, they prevent premature mitotic exit. Monoubiquitinated by NEDD4; leading to enhanced IGF1 signaling. During cell cycle, ubiquitination and proteasomal degradation are controlled by FZR1. In terms of tissue distribution, skeletal muscle, lung, brain, liver, kidney, heart and spleen.

It localises to the cytoplasm. It is found in the cytosol. Functionally, signaling adapter protein that participates in the signal transduction from two prominent receptor tyrosine kinases, insulin receptor/INSR and insulin-like growth factor I receptor/IGF1R. Plays therefore an important role in development, growth, glucose homeostasis as well as lipid metabolism. Upon phosphorylation by the insulin receptor, functions as a signaling scaffold that propagates insulin action through binding to SH2 domain-containing proteins including the p85 regulatory subunit of PI3K, NCK1, NCK2, GRB2 or SHP2. Recruitment of GRB2 leads to the activation of the guanine nucleotide exchange factor SOS1 which in turn triggers the Ras/Raf/MEK/MAPK signaling cascade. Activation of the PI3K/AKT pathway is responsible for most of insulin metabolic effects in the cell, and the Ras/Raf/MEK/MAPK is involved in the regulation of gene expression and in cooperation with the PI3K pathway regulates cell growth and differentiation. Acts a positive regulator of the Wnt/beta-catenin signaling pathway through suppression of DVL2 autophagy-mediated degradation leading to cell proliferation. Plays a role in cell cycle progression by promoting a robust spindle assembly checkpoint (SAC) during M-phase. In macrophages, IL4-induced tyrosine phosphorylation of IRS2 leads to the recruitment and activation of phosphoinositide 3-kinase (PI3K). This is Insulin receptor substrate 2 (Irs2) from Mus musculus (Mouse).